We begin with the raw amino-acid sequence, 375 residues long: Growth/differentiation factor 8 (375 aa).

The N-terminal stretch at 1 to 23 (MQKLAVYVYIYLFMQILVHPVAL) is a signal peptide. Residues 24-266 (DGSSQPTENA…VTDTPKRSRR (243 aa)) constitute a propeptide that is removed on maturation. Asn-71 carries N-linked (GlcNAc...) asparagine glycosylation. Intrachain disulfides connect Cys-272-Cys-282, Cys-281-Cys-340, Cys-309-Cys-372, and Cys-313-Cys-374.

This sequence belongs to the TGF-beta family. Homodimer; disulfide-linked.

It localises to the secreted. Functionally, acts specifically as a negative regulator of skeletal muscle growth. In Meleagris gallopavo (Wild turkey), this protein is Growth/differentiation factor 8 (MSTN).